The primary structure comprises 308 residues: Ribonuclease Z (308 aa).

Zn(2+)-binding residues include His60, His62, Asp64, His65, His140, Asp209, and His269. The active-site Proton acceptor is Asp64.

This sequence belongs to the RNase Z family. As to quaternary structure, homodimer. Zn(2+) serves as cofactor.

The catalysed reaction is Endonucleolytic cleavage of RNA, removing extra 3' nucleotides from tRNA precursor, generating 3' termini of tRNAs. A 3'-hydroxy group is left at the tRNA terminus and a 5'-phosphoryl group is left at the trailer molecule.. In terms of biological role, zinc phosphodiesterase, which displays some tRNA 3'-processing endonuclease activity. Probably involved in tRNA maturation, by removing a 3'-trailer from precursor tRNA. In Methanococcus maripaludis (strain DSM 14266 / JCM 13030 / NBRC 101832 / S2 / LL), this protein is Ribonuclease Z.